A 347-amino-acid polypeptide reads, in one-letter code: Quinolinate synthase (347 aa).

2 residues coordinate iminosuccinate: H47 and S68. A [4Fe-4S] cluster-binding site is contributed by C113. Residues 139–141 (YAN) and S156 contribute to the iminosuccinate site. Position 200 (C200) interacts with [4Fe-4S] cluster. Iminosuccinate-binding positions include 226–228 (HPE) and T243. C297 lines the [4Fe-4S] cluster pocket.

This sequence belongs to the quinolinate synthase family. Type 1 subfamily. Requires [4Fe-4S] cluster as cofactor.

The protein localises to the cytoplasm. It catalyses the reaction iminosuccinate + dihydroxyacetone phosphate = quinolinate + phosphate + 2 H2O + H(+). It participates in cofactor biosynthesis; NAD(+) biosynthesis; quinolinate from iminoaspartate: step 1/1. In terms of biological role, catalyzes the condensation of iminoaspartate with dihydroxyacetone phosphate to form quinolinate. The protein is Quinolinate synthase of Salmonella choleraesuis (strain SC-B67).